A 71-amino-acid polypeptide reads, in one-letter code: Dermonecrotic toxin LgSicTox-alphaI-Loxn-A (71 aa).

The active site involves histidine 12. The Mg(2+) site is built by glutamate 32, aspartate 34, and aspartate 48.

Requires Mg(2+) as cofactor. In terms of processing, contains 2 disulfide bonds. In terms of tissue distribution, expressed by the venom gland.

The protein resides in the secreted. The catalysed reaction is an N-(acyl)-sphingosylphosphocholine = an N-(acyl)-sphingosyl-1,3-cyclic phosphate + choline. It catalyses the reaction an N-(acyl)-sphingosylphosphoethanolamine = an N-(acyl)-sphingosyl-1,3-cyclic phosphate + ethanolamine. It carries out the reaction a 1-acyl-sn-glycero-3-phosphocholine = a 1-acyl-sn-glycero-2,3-cyclic phosphate + choline. The enzyme catalyses a 1-acyl-sn-glycero-3-phosphoethanolamine = a 1-acyl-sn-glycero-2,3-cyclic phosphate + ethanolamine. Functionally, catalyzes the hydrolysis of sphingomyelin. May also act on other phosphatidyl esters. In terms of biological role, dermonecrotic toxins cleave the phosphodiester linkage between the phosphate and headgroup of certain phospholipids (sphingolipid and lysolipid substrates), forming an alcohol (often choline) and a cyclic phosphate. This toxin acts on sphingomyelin (SM). It may also act on ceramide phosphoethanolamine (CPE), lysophosphatidylcholine (LPC) and lysophosphatidylethanolamine (LPE), but not on lysophosphatidylserine (LPS), and lysophosphatidylglycerol (LPG). It acts by transphosphatidylation, releasing exclusively cyclic phosphate products as second products. In vivo, induces dermonecrosis, but is not lethal. Induces hemolysis, vascular permeability, edema, inflammatory response, and platelet aggregation. The polypeptide is Dermonecrotic toxin LgSicTox-alphaI-Loxn-A (Loxosceles gaucho (Spider)).